The primary structure comprises 362 residues: Putative transport protein BB_0006 (362 aa).

Helical transmembrane passes span 20–40, 43–63, 68–88, 144–164, 212–232, 234–254, 265–285, and 304–326; these read FYCI…EAVF, LAIS…LARF, FLIV…IFSF, EIIG…FLLS, ILVF…WAVL, FVFN…IVIT, IVLY…NILE, and LFFW…TVIV.

The protein belongs to the autoinducer-2 exporter (AI-2E) (TC 2.A.86) family.

The protein localises to the cell membrane. This Borreliella burgdorferi (strain ATCC 35210 / DSM 4680 / CIP 102532 / B31) (Borrelia burgdorferi) protein is Putative transport protein BB_0006.